A 442-amino-acid chain; its full sequence is Pyruvate dehydrogenase complex protein X component, mitochondrial (442 aa).

A mitochondrion-targeting transit peptide spans 1–35; the sequence is MASLAAACRVSARLAARKLQHDAAVRGFRSSAAAL. The 77-residue stretch at 37-113 folds into the Lipoyl-binding domain; that stretch reads AQNFMMPALS…QVGTRIAVVA (77 aa). An N6-lipoyllysine modification is found at K78. The interval 119 to 169 is disordered; that stretch reads ITKLEIPPDEGPQQLKAAAPAPAPTPAPAPASPQPQFAAPTPSPPKASTKV. A compositionally biased stretch (pro residues) spans 139–151; that stretch reads APAPTPAPAPASP. Low complexity predominate over residues 152-169; that stretch reads QPQFAAPTPSPPKASTKV. The region spanning 175–215 is the Peripheral subunit-binding (PSBD) domain; the sequence is PLLPSVHQLIKENGLDESAVSNITPTGPGGRILKGDVLAYL. Residues 244–269 form a disordered region; that stretch reads AKPVEPEKPQEEKASAPAPAPRAPEP. The segment covering 245 to 257 has biased composition (basic and acidic residues); the sequence is KPVEPEKPQEEKA. The interaction to the E2 core stretch occupies residues 317–336; it reads PLPTNYQPTADELFDQVLGL.

Belongs to the 2-oxoacid dehydrogenase family. In terms of assembly, eukaryotic pyruvate dehydrogenase (PDH) complexes are organized as a core consisting of the oligomeric dihydrolipoamide acetyl-transferase (E2), around which are arranged multiple copies of pyruvate dehydrogenase (E1), dihydrolipoamide dehydrogenase (E3) and protein X (E3BP) bound by non-covalent bonds. The Chaetomium thermophilum PDH complex contains 60 E2 units, 12 E3BP units, about 20 E1 units, and 12 or more E3 units. The units are organized in 1 E2 60-mer, 4 E3BP trimers, about 20 E1 tetramers, and a maximum of 12 E3 dimers. The E3BP trimers are bound inside the icosahedral core with tetrahedral symmetry.

It is found in the mitochondrion. Its function is as follows. The 10-megadalton pyruvate dehydrogenase complex contains multiple copies of three enzymatic components: pyruvate dehydrogenase (E1), dihydrolipoamide acetyltransferase (E2) and lipoamide dehydrogenase (E3) and catalyzes the overall oxidative decarboxylation of pyruvate to form acetyl-CoA and CO(2). E3BP is responsible for tethering E3 in proximity to the core, forming the entire metabolon, and the number of E3s is limited by the number of E3BPs. Within the complex, pyruvate and thiamine pyrophosphate (TPP or vitamin B1) are bound by pyruvate dehydrogenase E1 subunits alpha and beta and pyruvate is decarboxylated leading to the 2-carbon hydrohyethyl bound to TPP. The E2 component contains covalently-bound lipoyl cofactors and transfers the hydroxyethyl group from TPP to an oxidized form of covalently bound lipoamide, and the resulting acetyl group is then transferred to free coenzyme A to form acetyl-CoA and reduced dihydrolipoamide-E2. Finally, the flavoprotein dihydrolipoamide dehydrogenase (E3) re-oxidizes the lipoyl group of dihydrolipoamide-E2 to form lipoamide-E2 and NADH. A fourth subunit, E3BP, is responsible for tethering E3 in proximity to the core, forming the entire metabolon. This Chaetomium thermophilum (strain DSM 1495 / CBS 144.50 / IMI 039719) (Thermochaetoides thermophila) protein is Pyruvate dehydrogenase complex protein X component, mitochondrial.